Reading from the N-terminus, the 398-residue chain is Elongation factor Tu (398 aa).

Positions 10 to 207 (KPHVNIGTIG…TVDEYIPEPE (198 aa)) constitute a tr-type G domain. The interval 19–26 (GHVDHGKT) is G1. Residue 19–26 (GHVDHGKT) coordinates GTP. Mg(2+) is bound at residue threonine 26. The tract at residues 63–67 (GITIN) is G2. The interval 84–87 (DAPG) is G3. GTP contacts are provided by residues 84–88 (DAPGH) and 139–142 (NKVD). Positions 139-142 (NKVD) are G4. The G5 stretch occupies residues 177-179 (SAL).

This sequence belongs to the TRAFAC class translation factor GTPase superfamily. Classic translation factor GTPase family. EF-Tu/EF-1A subfamily. As to quaternary structure, monomer.

It is found in the cytoplasm. The enzyme catalyses GTP + H2O = GDP + phosphate + H(+). Functionally, GTP hydrolase that promotes the GTP-dependent binding of aminoacyl-tRNA to the A-site of ribosomes during protein biosynthesis. In Streptococcus agalactiae serotype V (strain ATCC BAA-611 / 2603 V/R), this protein is Elongation factor Tu.